A 140-amino-acid polypeptide reads, in one-letter code: MKMFKSLSQLPRIVSPFQKCYSTDLISLVGIPRVKITKGQNRYLLVNIHTHGFTKYGRVIVRGADVDNHLTVFDSILEELEPQGICAKILGGGRILNEADSKKMKIYGTSRTFGSADHTRTRNILHSWTTYKDFKITVKN.

Residue arginine 42 coordinates substrate. The active-site Proton acceptor is the histidine 69. 110–112 (SRT) serves as a coordination point for substrate.

This sequence belongs to the janus family.

JanA and janB regulate somatic sex differentiation. In Drosophila yakuba (Fruit fly), this protein is Sex-regulated protein janus-B (janB).